Consider the following 378-residue polypeptide: Chaperone protein DnaJ (378 aa).

Residues 5–72 form the J domain; sequence DFYEVLGVPK…QKRAAYDQFG (68 aa). The CR-type zinc-finger motif lies at 138-216; sequence GKEAQIRIPS…CHGQGKVKKQ (79 aa). Zn(2+) is bound by residues cysteine 151, cysteine 154, cysteine 168, cysteine 171, cysteine 190, cysteine 193, cysteine 204, and cysteine 207. CXXCXGXG motif repeat units follow at residues 151–158, 168–175, 190–197, and 204–211; these read CETCHGSG, CTTCSGTG, CPHCRGTG, and CVTCHGQG. Residues 354-378 are disordered; it reads SLKKGGGKHSPSGESWTDRLKNLFT. Residues 369–378 show a composition bias toward basic and acidic residues; that stretch reads WTDRLKNLFT.

The protein belongs to the DnaJ family. Homodimer. Requires Zn(2+) as cofactor.

Its subcellular location is the cytoplasm. Participates actively in the response to hyperosmotic and heat shock by preventing the aggregation of stress-denatured proteins and by disaggregating proteins, also in an autonomous, DnaK-independent fashion. Unfolded proteins bind initially to DnaJ; upon interaction with the DnaJ-bound protein, DnaK hydrolyzes its bound ATP, resulting in the formation of a stable complex. GrpE releases ADP from DnaK; ATP binding to DnaK triggers the release of the substrate protein, thus completing the reaction cycle. Several rounds of ATP-dependent interactions between DnaJ, DnaK and GrpE are required for fully efficient folding. Also involved, together with DnaK and GrpE, in the DNA replication of plasmids through activation of initiation proteins. The chain is Chaperone protein DnaJ from Paracidovorax citrulli (strain AAC00-1) (Acidovorax citrulli).